The primary structure comprises 253 residues: Ubiquinone biosynthesis O-methyltransferase (253 aa).

Positions 47, 78, 99, and 141 each coordinate S-adenosyl-L-methionine.

Belongs to the methyltransferase superfamily. UbiG/COQ3 family.

The catalysed reaction is a 3-demethylubiquinol + S-adenosyl-L-methionine = a ubiquinol + S-adenosyl-L-homocysteine + H(+). It carries out the reaction a 3-(all-trans-polyprenyl)benzene-1,2-diol + S-adenosyl-L-methionine = a 2-methoxy-6-(all-trans-polyprenyl)phenol + S-adenosyl-L-homocysteine + H(+). It participates in cofactor biosynthesis; ubiquinone biosynthesis. Its function is as follows. O-methyltransferase that catalyzes the 2 O-methylation steps in the ubiquinone biosynthetic pathway. The polypeptide is Ubiquinone biosynthesis O-methyltransferase (Bradyrhizobium sp. (strain ORS 278)).